Reading from the N-terminus, the 401-residue chain is Tryptophan synthase beta chain (401 aa).

Lysine 91 is subject to N6-(pyridoxal phosphate)lysine.

It belongs to the TrpB family. Tetramer of two alpha and two beta chains. It depends on pyridoxal 5'-phosphate as a cofactor.

It catalyses the reaction (1S,2R)-1-C-(indol-3-yl)glycerol 3-phosphate + L-serine = D-glyceraldehyde 3-phosphate + L-tryptophan + H2O. Its pathway is amino-acid biosynthesis; L-tryptophan biosynthesis; L-tryptophan from chorismate: step 5/5. In terms of biological role, the beta subunit is responsible for the synthesis of L-tryptophan from indole and L-serine. This Lactococcus lactis subsp. cremoris (strain MG1363) protein is Tryptophan synthase beta chain.